The chain runs to 178 residues: Leukemia NUP98 fusion partner 1 (178 aa).

Disordered stretches follow at residues 28–55 (EDQRGLRERHRLQATSHRKTSLPCPLPV), 89–108 (SEDGSFKEPLESKGRSHSKI), and 147–178 (IKSRKKVEEERSSRKEEHGEAHMAPLFEKGPE). Positions 34 to 47 (RERHRLQATSHRKT) are enriched in basic residues. Basic and acidic residues predominate over residues 147 to 167 (IKSRKKVEEERSSRKEEHGEA).

This chain is Leukemia NUP98 fusion partner 1 (LNP1), found in Homo sapiens (Human).